Consider the following 290-residue polypeptide: MAEITASMVKDLREKTDAPMMDCKKALTEAGGDMQKAEEILRVRFGNKAAKSAGRVAAEGVVTIAISPDGKSAAMVEVNCETDFVAKNDDFLALSAALAEMVLTQKPADVAALSALPYKNSTVEGFRTELVGKIGENMSVRRFVRLDGQGKFASYIHGGKIGVLVDVTGDEAIAKDIAMHIAASKPKSLDASGVPQDLLDTERRVAIEKAKEAGKPEAMLEKIAEGTVQKFLKEVTLLSQPFVKDDKQTVEQVLKSKNSQCHGFTMYVVGEGIEKKVSDFAAEVAAAAKV.

Residues 82–85 form an involved in Mg(2+) ion dislocation from EF-Tu region; it reads TDFV.

It belongs to the EF-Ts family.

It is found in the cytoplasm. In terms of biological role, associates with the EF-Tu.GDP complex and induces the exchange of GDP to GTP. It remains bound to the aminoacyl-tRNA.EF-Tu.GTP complex up to the GTP hydrolysis stage on the ribosome. The sequence is that of Elongation factor Ts from Thiobacillus denitrificans (strain ATCC 25259 / T1).